Consider the following 387-residue polypeptide: Anhydro-N-acetylmuramic acid kinase (387 aa).

9–16 is an ATP binding site; it reads GTSADGVD.

The protein belongs to the anhydro-N-acetylmuramic acid kinase family.

The catalysed reaction is 1,6-anhydro-N-acetyl-beta-muramate + ATP + H2O = N-acetyl-D-muramate 6-phosphate + ADP + H(+). It functions in the pathway amino-sugar metabolism; 1,6-anhydro-N-acetylmuramate degradation. It participates in cell wall biogenesis; peptidoglycan recycling. Its function is as follows. Catalyzes the specific phosphorylation of 1,6-anhydro-N-acetylmuramic acid (anhMurNAc) with the simultaneous cleavage of the 1,6-anhydro ring, generating MurNAc-6-P. Is required for the utilization of anhMurNAc either imported from the medium or derived from its own cell wall murein, and thus plays a role in cell wall recycling. The protein is Anhydro-N-acetylmuramic acid kinase of Synechococcus sp. (strain WH7803).